The sequence spans 252 residues: RNA-binding protein 2 (252 aa).

Disordered regions lie at residues 1–34 (MADG…PSGV) and 232–252 (RLQF…RGKR). The RRM domain maps to 152–238 (STLYVEGLPS…SYLRLQFSRS (87 aa)). A compositionally biased stretch (gly residues) spans 242-252 (RSGGPGPRGKR).

In terms of biological role, probable RNA-binding protein. The polypeptide is RNA-binding protein 2 (Medicago truncatula (Barrel medic)).